The primary structure comprises 104 residues: Cytochrome c6 (104 aa).

Positions methionine 1–alanine 20 are cleaved as a signal peptide. Heme c contacts are provided by cysteine 34, cysteine 37, histidine 38, and methionine 78.

This sequence belongs to the cytochrome c family. PetJ subfamily. As to quaternary structure, monomer. In terms of processing, binds 1 heme c group covalently per subunit.

It localises to the plastid. The protein resides in the chloroplast thylakoid lumen. Functions as an electron carrier between membrane-bound cytochrome b6-f and photosystem I in oxygenic photosynthesis. The protein is Cytochrome c6 of Cyanidioschyzon merolae (strain NIES-3377 / 10D) (Unicellular red alga).